A 205-amino-acid chain; its full sequence is Adenylyl-sulfate kinase (205 aa).

31 to 38 (GLSGSGKS) contributes to the ATP binding site. Ser105 acts as the Phosphoserine intermediate in catalysis.

The protein belongs to the APS kinase family.

The catalysed reaction is adenosine 5'-phosphosulfate + ATP = 3'-phosphoadenylyl sulfate + ADP + H(+). It functions in the pathway sulfur metabolism; hydrogen sulfide biosynthesis; sulfite from sulfate: step 2/3. Its function is as follows. Catalyzes the synthesis of activated sulfate. The protein is Adenylyl-sulfate kinase of Shewanella pealeana (strain ATCC 700345 / ANG-SQ1).